A 313-amino-acid polypeptide reads, in one-letter code: Porphobilinogen deaminase (313 aa).

Cys242 bears the S-(dipyrrolylmethanemethyl)cysteine mark.

The protein belongs to the HMBS family. Monomer. The cofactor is dipyrromethane.

The enzyme catalyses 4 porphobilinogen + H2O = hydroxymethylbilane + 4 NH4(+). It functions in the pathway porphyrin-containing compound metabolism; protoporphyrin-IX biosynthesis; coproporphyrinogen-III from 5-aminolevulinate: step 2/4. Its function is as follows. Tetrapolymerization of the monopyrrole PBG into the hydroxymethylbilane pre-uroporphyrinogen in several discrete steps. This Pseudomonas putida (strain ATCC 700007 / DSM 6899 / JCM 31910 / BCRC 17059 / LMG 24140 / F1) protein is Porphobilinogen deaminase.